A 264-amino-acid chain; its full sequence is Acyl-[acyl-carrier-protein]--UDP-N-acetylglucosamine O-acyltransferase (264 aa).

The protein belongs to the transferase hexapeptide repeat family. LpxA subfamily. Homotrimer.

The protein localises to the cytoplasm. The catalysed reaction is a (3R)-hydroxyacyl-[ACP] + UDP-N-acetyl-alpha-D-glucosamine = a UDP-3-O-[(3R)-3-hydroxyacyl]-N-acetyl-alpha-D-glucosamine + holo-[ACP]. It participates in glycolipid biosynthesis; lipid IV(A) biosynthesis; lipid IV(A) from (3R)-3-hydroxytetradecanoyl-[acyl-carrier-protein] and UDP-N-acetyl-alpha-D-glucosamine: step 1/6. In terms of biological role, involved in the biosynthesis of lipid A, a phosphorylated glycolipid that anchors the lipopolysaccharide to the outer membrane of the cell. This is Acyl-[acyl-carrier-protein]--UDP-N-acetylglucosamine O-acyltransferase from Leptothrix cholodnii (strain ATCC 51168 / LMG 8142 / SP-6) (Leptothrix discophora (strain SP-6)).